Here is a 1059-residue protein sequence, read N- to C-terminus: MPVSMAVCETANVVNAALRESLGGNSSAGSSTDQAKSGEDTNGSLQNHIVANAKRILMAKIEYEEVPNYHESVLENLKSKYIVIKPGNPGAINGFSGKNNTGKLVGANGHDNNGARKQAEHPNNQSHHNHPHPTSNPNELPKPKRVLYPRENIRIGWKQSERKWQVGTGMINVGNTCYLNSTLQALLHIPALANWLVSEQAHLADCNVAEPGSGCIICAMAKTLLATQSNQSAVRPFLIYSKLKQICKHMVVGRQEDAHEFLRFLVEAMERAYLMRFRNYKELDQLVKETTPLGQIFGGYLRSEVRCLSCNHVSITFQHFQDLLLDIRKADSLEDAFEGHFSRERLEDMGYKCEGCKKKLKRFSMIGNKLTKQISFKPRIDLSKYAARSPAAQAQPLTYRLVSMVTHLGASQHCGHYTAIGSTDTGSFYNFDDSYVRPITMQNVCNTNAYIMFFELDLSQAASPPANRPNGVRLTNGHSTTPVPAATVSSPSPTRFIGPQLPPGGANGYTNGNAQKTAIQFKQQNQQNGLQLGTGKFQDTAKPPLVGAYAKGEATSAPTANGNKSSSPSSNSSSNHKSINQQQYLPISSDDEDIDDEMKPGPTTAQLPSMPNMTEDNTEPKAKSPVKIHLKTPVKTPLKSLVPYESASEEEEAPLPNPRQSPGGEDFSESDQESGQTNGHSKTNGSLTNGSASSSVHVNNSKQKTDAIDEIFKSLKKSADSEEDDDEEEPSIQLTNGWHPQKQSQSQSKAPPSPKTPPSPAVIKSKTGIWKVTRKDEVDAIDDDDDAVVVEGAPVKIPTPNKTHRNPFSSSKPSTDSPATPGAKRQKLLNGSALKSHQQPRVGNGYQSNVTSNGSTVNELLKQSYRGYGASVLSWNGKPAELEKEPFELVCAKRIAGHGSVEGSDIVEGSVAVDAAVTSSSNSNDVVVIAVALLVDAREQRQRDLDDDEENEMDRGRQRKVKSGSAKGNNASNSTPGYNPFQEYEGQKRWNKNGGGGGFSRFYNQNYRQNFQQRNKFKFNRFGGAGSAKFQQQRALQRHLSAGGGFSRRQPSAQQQQQT.

2 disordered regions span residues leucine 22–leucine 45 and glycine 102–arginine 145. The segment covering glycine 23 to leucine 45 has biased composition (polar residues). Positions histidine 121–asparagine 138 are enriched in low complexity. Residues threonine 168–aspartate 457 enclose the USP domain. Cysteine 177 (nucleophile) is an active-site residue. Residue histidine 416 is the Proton acceptor of the active site. Disordered stretches follow at residues proline 464–glycine 512, alanine 554–asparagine 853, arginine 941–glutamine 1005, and phenylalanine 1022–threonine 1059. 2 stretches are compositionally biased toward low complexity: residues serine 479–threonine 494 and asparagine 561–asparagine 580. Phosphoserine is present on residues serine 490 and serine 492. Residues threonine 603–glutamate 615 are compositionally biased toward polar residues. Residues threonine 632 and threonine 636 each carry the phosphothreonine modification. 2 positions are modified to phosphoserine: serine 646 and serine 648. Residues glutamate 673 to lysine 702 are compositionally biased toward polar residues. Residues glutamine 703–aspartate 720 show a composition bias toward basic and acidic residues. At serine 721 the chain carries Phosphoserine. The span at serine 721–proline 730 shows a compositional bias: acidic residues. Residues proline 740–alanine 750 show a composition bias toward low complexity. Over residues proline 751–proline 760 the composition is skewed to pro residues. The residue at position 753 (serine 753) is a Phosphoserine. Residue threonine 756 is modified to Phosphothreonine. Serine 759 is modified (phosphoserine). A compositionally biased stretch (acidic residues) spans aspartate 779–valine 788. Position 799 is a phosphothreonine (threonine 799). The segment covering asparagine 806 to proline 818 has biased composition (polar residues). Phosphoserine is present on serine 817. A Phosphothreonine modification is found at threonine 820. The segment covering alanine 833 to asparagine 853 has biased composition (polar residues). A compositionally biased stretch (low complexity) spans serine 963–serine 974.

It belongs to the peptidase C19 family. In terms of assembly, interacts with atms/PAF1, but not with CycT.

Its subcellular location is the nucleus. The protein resides in the nucleolus. It catalyses the reaction Thiol-dependent hydrolysis of ester, thioester, amide, peptide and isopeptide bonds formed by the C-terminal Gly of ubiquitin (a 76-residue protein attached to proteins as an intracellular targeting signal).. Functionally, required for maintaining multiple types of adult stem cells, including male and female germline, epithelial follicle cell and intestinal stem cells. May function as a transcriptional repressor by continually deubiquiting histone H2B at the promoters of genes critical for cellular differentiation, thereby preventing histone H3 'Lys-4' trimethylation (H3K4). Controls selective autophagy activation by ubiquitinated proteins. This chain is Ubiquitin carboxyl-terminal hydrolase 36 (Usp36), found in Drosophila sechellia (Fruit fly).